Here is a 695-residue protein sequence, read N- to C-terminus: Scarecrow-like protein 31 (695 aa).

Disordered stretches follow at residues 105-136 (VISDSQTQSSIPNNSITTSSSSNSGDYSNSSN) and 234-260 (ISKTRKNHHEREEEEDDLEEARRRSKQ). Low complexity predominate over residues 113 to 136 (SSIPNNSITTSSSSNSGDYSNSSN). Residues 233–266 (AISKTRKNHHEREEEEDDLEEARRRSKQFAVNEE) are a coiled coil. In terms of domain architecture, GRAS spans 306 to 693 (AKKKSRAVDF…RILFSSSCWV (388 aa)). Residues 313–377 (VDFRTLLTLC…EGSTGTMIQS (65 aa)) form a leucine repeat I (LRI) region. Positions 396–461 (YSVFLSASPF…PGLRKLRITG (66 aa)) are VHIID. The VHIID signature appears at 427-431 (LHIVD). Positions 477–509 (DTGRRLTEYCKRFGVPFEYNAIASKNWETIKME) are leucine repeat II (LRII). The segment at 519-614 (LAVNAVLRFK…GEFYGREVMN (96 aa)) is PFYRE. An SAW region spans residues 617-693 (ACEGVDRVER…RILFSSSCWV (77 aa)).

The protein belongs to the GRAS family. In terms of tissue distribution, expressed in seedlings, roots, cotyledons, leaves and sepals.

The protein resides in the nucleus. Functionally, probable transcription factor involved in plant development. The protein is Scarecrow-like protein 31 (SCL31) of Arabidopsis thaliana (Mouse-ear cress).